The following is a 339-amino-acid chain: Sphingomyelinase D (339 aa).

Positions 1-21 (MVSLLRLCSFLLAAGSILVQG) are cleaved as a signal peptide. His60 is a catalytic residue. Mg(2+)-binding residues include Glu80, Asp82, and Asp128. Positions 309 to 316 (ATVDDNPW) match the SMD-tail motif. Residues 313 to 339 (DNPWSSMSKKGSSKSSWVKGEVPSIAH) form a disordered region. Over residues 317-328 (SSMSKKGSSKSS) the composition is skewed to low complexity.

This sequence belongs to the sphingomyelinase D/phospholipase D family. Requires Mg(2+) as cofactor.

It localises to the secreted. It catalyses the reaction a sphingomyelin + H2O = an N-acylsphing-4-enine 1-phosphate + choline + H(+). Its function is as follows. Catalyzes the hydrolysis of sphingomyelin. Sphingomyelinases D are produced by some spider in their venoms, but also by arthropods such as ticks, or pathogenic bacteria and fungi. They might play a role in pathogenicity through different mechanisms, such as membrane destabilization and host cell penetration, but also pulmonary inflammation and cutaneous lesions. This chain is Sphingomyelinase D, found in Arthroderma benhamiae (strain ATCC MYA-4681 / CBS 112371) (Trichophyton mentagrophytes).